Here is a 342-residue protein sequence, read N- to C-terminus: Uroporphyrinogen decarboxylase (342 aa).

Residues 24 to 28 (RQAGR), Asp-74, Tyr-151, Ser-206, and His-322 contribute to the substrate site.

This sequence belongs to the uroporphyrinogen decarboxylase family. In terms of assembly, homodimer.

The protein resides in the cytoplasm. It carries out the reaction uroporphyrinogen III + 4 H(+) = coproporphyrinogen III + 4 CO2. Its pathway is porphyrin-containing compound metabolism; protoporphyrin-IX biosynthesis; coproporphyrinogen-III from 5-aminolevulinate: step 4/4. Catalyzes the decarboxylation of four acetate groups of uroporphyrinogen-III to yield coproporphyrinogen-III. The protein is Uroporphyrinogen decarboxylase of Paracoccus denitrificans (strain Pd 1222).